The sequence spans 927 residues: Sodium/calcium exchanger 3 (927 aa).

An N-terminal signal peptide occupies residues 1 to 30 (MAWLRLQPLTSAFLHFGLVTFVLFLNGLRA). At 31-73 (EAGDLRDVPSAGQNNESCSGSSDCKEGVILPIWYPENPSLGDK) the chain is on the extracellular side. A glycan (N-linked (GlcNAc...) asparagine) is linked at Asn-45. A helical transmembrane segment spans residues 74-94 (IARVIVYFVALIYMFLGVSII). Residues 95 to 147 (ADRFMASIEVITSQEREVTIKKPNGETSTTTIRVWNETVSNLTLMALGSSAPE) are Cytoplasmic-facing. The stretch at 140-180 (ALGSSAPEILLSLIEVCGHGFIAGDLGPSTIVGSAAFNMFI) is one Alpha-1 repeat. The chain crosses the membrane as a helical span at residues 148–168 (ILLSLIEVCGHGFIAGDLGPS). Position 169 (Thr-169) is a topological domain, extracellular. Residues 170 to 190 (IVGSAAFNMFIIIGICVYVIP) form a helical membrane-spanning segment. Topologically, residues 191 to 202 (DGETRKIKHLRV) are cytoplasmic. A helical membrane pass occupies residues 203–223 (FFVTAAWSVFAYIWLYMILAV). At 224 to 230 (FSPGVVQ) the chain is on the extracellular side. A helical membrane pass occupies residues 231 to 251 (VWEGLLTLFFFPVCVLLAWVA). Residues 252–726 (DKRLLFYKYM…DESGEERLPS (475 aa)) are Cytoplasmic-facing. The tract at residues 253 to 272 (KRLLFYKYMHKRYRTDKHRG) is putative calmodulin-binding region. Calx-beta domains are found at residues 386-485 (VHTD…VRLS) and 519-619 (ATVT…IALG). Ca(2+)-binding residues include Glu-409, Asp-445, Asp-470, Asp-471, Ile-473, Glu-475, Glu-478, Asp-525, Asp-526, Asp-527, Glu-543, Asp-579, Glu-606, Glu-607, and Glu-672. Residues 727–747 (CFDYVMHFLTVFWKVLFACVP) traverse the membrane as a helical segment. Over 748–754 (PTEYCHG) the chain is Extracellular. Residues 755-775 (WACFVVSILIIGMLTAIIGDL) traverse the membrane as a helical segment. The Cytoplasmic segment spans residues 776–778 (ASH). Residues 779–799 (FGCTIGLKDSVTAVVFVAFGT) form a helical membrane-spanning segment. One copy of the Alpha-2 repeat lies at 796–832 (AFGTSVPDTFASKAAALQDVYADASIGNVTGSNAVNV). Residues 800–828 (SVPDTFASKAAALQDVYADASIGNVTGSN) lie on the Extracellular side of the membrane. Asn-823 carries N-linked (GlcNAc...) asparagine glycosylation. Residues 829 to 849 (AVNVFLGIGLAWSVAAIYWAM) form a helical membrane-spanning segment. The Cytoplasmic segment spans residues 850 to 860 (QGQEFHVSAGT). A helical transmembrane segment spans residues 861-881 (LAFSVTLFTIFAFVCLSVLLY). Residues 882–903 (RRRPHLGGELGGPRGCKLATTW) are Extracellular-facing. A helical transmembrane segment spans residues 904–924 (LFVSLWLLYVLFATLEAYCYI). Over 925 to 927 (KGF) the chain is Cytoplasmic.

This sequence belongs to the Ca(2+):cation antiporter (CaCA) (TC 2.A.19) family. SLC8 subfamily. As to quaternary structure, interacts with AKAP1. In terms of tissue distribution, detected in neurons in brain cortex and hippocampus. Detected in pyramidal cell bodies and processes, in granule cells and interneurons in the CA1 and CA3 region of the hippocampus. Detected on astrocyte processes in brain cortex. Detected on endothelial cells in hippocampus capillaries (at protein level). Restricted to brain and skeletal muscle.

It localises to the cell membrane. Its subcellular location is the perikaryon. It is found in the cell projection. The protein resides in the dendrite. The protein localises to the dendritic spine. It localises to the sarcolemma. Its subcellular location is the cytoplasm. It is found in the sarcoplasm. The protein resides in the cell junction. The protein localises to the mitochondrion outer membrane. It localises to the endoplasmic reticulum membrane. Its subcellular location is the perinuclear region. It catalyses the reaction Ca(2+)(in) + 3 Na(+)(out) = Ca(2+)(out) + 3 Na(+)(in). With respect to regulation, calcium transport is down-regulated by Na(+) and stimulated by Ca(2+). Functionally, mediates the electrogenic exchange of Ca(2+) against Na(+) ions across the cell membrane, and thereby contributes to the regulation of cytoplasmic Ca(2+) levels and Ca(2+)-dependent cellular processes. Contributes to cellular Ca(2+) homeostasis in excitable cells, both in muscle and in brain. In a first phase, voltage-gated channels mediate the rapid increase of cytoplasmic Ca(2+) levels due to release of Ca(2+) stores from the endoplasmic reticulum. SLC8A3 mediates the export of Ca(2+) from the cell during the next phase, so that cytoplasmic Ca(2+) levels rapidly return to baseline. Contributes to Ca(2+) transport during excitation-contraction coupling in muscle. In neurons, contributes to the rapid decrease of cytoplasmic Ca(2+) levels back to baseline after neuronal activation, and thereby contributes to modulate synaptic plasticity, learning and memory. Required for normal oligodendrocyte differentiation and for normal myelination. Mediates Ca(2+) efflux from mitochondria and contributes to mitochondrial Ca(2+) ion homeostasis. The protein is Sodium/calcium exchanger 3 (Slc8a3) of Rattus norvegicus (Rat).